Consider the following 79-residue polypeptide: Ixosin (79 aa).

Residues 1-56 (MSAHKVQIGLSSGQFRVALQVPSVRLKGLGSFHTGSIVLPSQGSLREDQISLHNQD) constitute a propeptide, removed in mature form.

In terms of biological role, has antifungal activity against C.albicans. Has antibacterial activity against the Gram-positive bacterium S.aureus and the Gram-negative bacterium E.coli. Lacks hemolytic activity against rabbit erythrocytes. In Ixodes sinensis (Hard tick), this protein is Ixosin.